The chain runs to 466 residues: MAKTLYEKLFDAHVVYEAENETPLLYIDRHLVHEVTSPQAFDGLRTHGRPVRQPGKTFATMDHNVSTQTKDINACGEMARIQMQELIKNCKEFGVELYDLNHPYQGIVHVMGPEQGVTLPGMTIVCGDSHTATHGAFGALAFGIGTSEVEHVLATQTLKQGRAKTMKIEVQGKAAPGITAKDIVLAIIGKTGSAGGTGHVVEFCGEAIRDLSMEGRMTLCNMAIEMGAKAGLVAPDETTFNYVKGRLHAPKGKDFDDAVAYWKTLQTDEGATFDTVVTLQAEEISPQVTWGTNPGQVISVNDNIPDPASFADPVERASAEKALAYMGLKPGIPLTEVAIDKVFIGSCTNSRIEDLRAAAEIAKGRKVAPGVQALVVPGSGPVKAQAEAEGLDKIFIEAGFEWRLPGCSMCLAMNNDRLNPGERCASTSNRNFEGRQGRGGRTHLVSPAMAAAAAVTGHFADIRNIK.

Cys-347, Cys-407, and Cys-410 together coordinate [4Fe-4S] cluster.

It belongs to the aconitase/IPM isomerase family. LeuC type 1 subfamily. In terms of assembly, heterodimer of LeuC and LeuD. The cofactor is [4Fe-4S] cluster.

The catalysed reaction is (2R,3S)-3-isopropylmalate = (2S)-2-isopropylmalate. Its pathway is amino-acid biosynthesis; L-leucine biosynthesis; L-leucine from 3-methyl-2-oxobutanoate: step 2/4. Its function is as follows. Catalyzes the isomerization between 2-isopropylmalate and 3-isopropylmalate, via the formation of 2-isopropylmaleate. The sequence is that of 3-isopropylmalate dehydratase large subunit from Escherichia coli (strain 55989 / EAEC).